The primary structure comprises 548 residues: Probable aquaglyceroporin-4 (548 aa).

A compositionally biased stretch (polar residues) spans 1–22 (MAGTQDQSQDYFSKPTTPSTPG). 3 disordered regions span residues 1–63 (MAGT…LPST), 76–101 (SRGF…SHFH), and 158–270 (KEET…ESGD). At 1–290 (MAGTQDQSQD…ARLRARHPEP (290 aa)) the chain is on the cytoplasmic side. The span at 38-48 (PDRESGTERAK) shows a compositional bias: basic and acidic residues. Composition is skewed to polar residues over residues 77–97 (RGFS…PQHS) and 171–200 (SRTT…SRTT). The span at 249-265 (PDFKVDGEPLGHQEKPC) shows a compositional bias: basic and acidic residues. Residues 291-311 (LAEFLATAVAIFLGLTGTLSV) form a helical membrane-spanning segment. A glycan (N-linked (GlcNAc...) asparagine) is linked at N312. The Extracellular segment spans residues 312–327 (NLSATQSQPYGTYETS). Residues 328–348 (CWAWGFAWMFGIYLGGGVSGA) form a helical membrane-spanning segment. At 349 to 369 (HMNPAISVSLSIFRGFPWRQC) the chain is on the cytoplasmic side. Positions 351–353 (NPA) match the NPA 1 motif. Residues 370 to 390 (VIYVFVQFIASIVAGALAYAM) form a helical membrane-spanning segment. The Extracellular portion of the chain corresponds to 391–420 (YADSINHVDPDMTKMSMTFFSTPREWVTLK). The helical transmembrane segment at 421–441 (SAFFNQVVGSAIMMIAVFALG) threads the bilayer. The Cytoplasmic portion of the chain corresponds to 442 to 448 (DDQNNPP). A helical membrane pass occupies residues 449-469 (GAGMHALVLGFLVTTLKFTLG). Residues 470–508 (YNIGSALNPASDFGPRVIAYAVGFRGDNVFHSGWWFYGP) lie on the Extracellular side of the membrane. The short motif at 477 to 479 (NPA) is the NPA 2 element. The helical transmembrane segment at 509 to 529 (WAATLIGSLLGCTLYDGFVFV) threads the bilayer. Residues 530–548 (GSESPVNFRVDKRVKKLFN) are Cytoplasmic-facing.

Belongs to the MIP/aquaporin (TC 1.A.8) family.

The protein localises to the membrane. It carries out the reaction H2O(in) = H2O(out). The enzyme catalyses glycerol(in) = glycerol(out). Probable water/glycerol channel that may have redundant functions with FgAQP2. This chain is Probable aquaglyceroporin-4, found in Gibberella zeae (strain ATCC MYA-4620 / CBS 123657 / FGSC 9075 / NRRL 31084 / PH-1) (Wheat head blight fungus).